A 494-amino-acid chain; its full sequence is 3-octaprenyl-4-hydroxybenzoate carboxy-lyase (494 aa).

Residue Asn-172 participates in Mn(2+) binding. Residues 175–177 (IYR), 189–191 (RWL), and 194–195 (RG) contribute to the prenylated FMN site. Glu-238 lines the Mn(2+) pocket. Asp-287 functions as the Proton donor in the catalytic mechanism.

Belongs to the UbiD family. In terms of assembly, homohexamer. Prenylated FMN serves as cofactor. Mn(2+) is required as a cofactor.

Its subcellular location is the cell membrane. It catalyses the reaction a 4-hydroxy-3-(all-trans-polyprenyl)benzoate + H(+) = a 2-(all-trans-polyprenyl)phenol + CO2. It functions in the pathway cofactor biosynthesis; ubiquinone biosynthesis. Functionally, catalyzes the decarboxylation of 3-octaprenyl-4-hydroxy benzoate to 2-octaprenylphenol, an intermediate step in ubiquinone biosynthesis. This chain is 3-octaprenyl-4-hydroxybenzoate carboxy-lyase, found in Escherichia coli O9:H4 (strain HS).